A 341-amino-acid chain; its full sequence is Uroporphyrinogen decarboxylase (341 aa).

Residues arginine 23 to arginine 27, phenylalanine 42, aspartate 73, tyrosine 148, serine 203, and histidine 318 contribute to the substrate site.

This sequence belongs to the uroporphyrinogen decarboxylase family. As to quaternary structure, homodimer.

It is found in the cytoplasm. It carries out the reaction uroporphyrinogen III + 4 H(+) = coproporphyrinogen III + 4 CO2. The protein operates within porphyrin-containing compound metabolism; protoporphyrin-IX biosynthesis; coproporphyrinogen-III from 5-aminolevulinate: step 4/4. Functionally, catalyzes the decarboxylation of four acetate groups of uroporphyrinogen-III to yield coproporphyrinogen-III. This chain is Uroporphyrinogen decarboxylase, found in Brucella melitensis biotype 1 (strain ATCC 23456 / CCUG 17765 / NCTC 10094 / 16M).